Here is a 335-residue protein sequence, read N- to C-terminus: Eukaryotic translation initiation factor 3 subunit I (335 aa).

5 WD repeats span residues 8–47 (GHER…RLGT), 50–91 (GHQG…KVWD), 145–184 (CTES…QLEN), 189–228 (EFDN…ILKT), and 286–325 (GHFG…FDFM).

This sequence belongs to the eIF-3 subunit I family. In terms of assembly, component of the eukaryotic translation initiation factor 3 (eIF-3) complex.

Its subcellular location is the cytoplasm. Component of the eukaryotic translation initiation factor 3 (eIF-3) complex, which is involved in protein synthesis of a specialized repertoire of mRNAs and, together with other initiation factors, stimulates binding of mRNA and methionyl-tRNAi to the 40S ribosome. The eIF-3 complex specifically targets and initiates translation of a subset of mRNAs involved in cell proliferation. The sequence is that of Eukaryotic translation initiation factor 3 subunit I (tif34) from Aspergillus oryzae (strain ATCC 42149 / RIB 40) (Yellow koji mold).